Here is a 272-residue protein sequence, read N- to C-terminus: 3',5'-cyclic adenosine monophosphate phosphodiesterase CpdA (272 aa).

Fe cation contacts are provided by Asp21, His23, Asp63, Asn93, His161, His200, and His202. Residues His23, Asp63, and 93-94 contribute to the AMP site; that span reads NH. His202 provides a ligand contact to AMP.

The protein belongs to the cyclic nucleotide phosphodiesterase class-III family. Monomer. A divalent metal cation serves as cofactor.

The enzyme catalyses 3',5'-cyclic AMP + H2O = AMP + H(+). Activated by iron. Other divalent metal ions have no effect. Its function is as follows. Hydrolyzes cAMP to 5'-AMP. Plays an important regulatory role in modulating the intracellular concentration of cAMP, thereby influencing cAMP-dependent processes. Specifically required for regulation of virulence factors. Can also hydrolyze cGMP, but cGMP is unlikely to be synthesized by P.aeruginosa and cAMP is probably the biologically relevant substrate for CpdA in vivo. The protein is 3',5'-cyclic adenosine monophosphate phosphodiesterase CpdA of Pseudomonas aeruginosa.